Reading from the N-terminus, the 342-residue chain is tRNA N6-adenosine threonylcarbamoyltransferase (342 aa).

Positions 111 and 115 each coordinate Fe cation. Substrate-binding positions include 134–138 (LVSGG), Asp-167, Gly-180, and Asn-277. Asp-305 provides a ligand contact to Fe cation.

It belongs to the KAE1 / TsaD family. Fe(2+) is required as a cofactor.

It localises to the cytoplasm. The catalysed reaction is L-threonylcarbamoyladenylate + adenosine(37) in tRNA = N(6)-L-threonylcarbamoyladenosine(37) in tRNA + AMP + H(+). Functionally, required for the formation of a threonylcarbamoyl group on adenosine at position 37 (t(6)A37) in tRNAs that read codons beginning with adenine. Is involved in the transfer of the threonylcarbamoyl moiety of threonylcarbamoyl-AMP (TC-AMP) to the N6 group of A37, together with TsaE and TsaB. TsaD likely plays a direct catalytic role in this reaction. This chain is tRNA N6-adenosine threonylcarbamoyltransferase, found in Haemophilus influenzae (strain ATCC 51907 / DSM 11121 / KW20 / Rd).